A 436-amino-acid polypeptide reads, in one-letter code: MSMFLDTAKIKVKAGNGGDGMVAFRREKYVPNGGPWGGDGGRGGNVVFVVDEGLRTLMDFRYNRHFKADSGEKGMTKGMHGRGAEDLRVRVPQGTTVRDAETGKVLTDLIEHGQEFIVAHGGRGGRGNIRFATPKNPAPEISENGEPGQERELQLELKILADVGLVGFPSVGKSTLLSVITSAKPKIGAYHFTTIVPNLGMVRTQSGESFAVADLPGLIEGASQGVGLGTQFLRHIERTRVILHIIDMSASEGRDPYEDYLAINKELESYNLRLMERPQIIVANKMDMPESQENLEDFKKKLAENYDEFEELPAIFPISGLTKQGLATLLDATAELLDKTPEFLLYDESDMEEEAYYGFDEEEKAFEISRDDDATWVLSGEKLMKLFNMTNFDRDESVMKFARQLRGMGVDEALRARGAKDGDLVRIGKFEFEFVD.

The Obg domain maps to 2–160 (SMFLDTAKIK…RELQLELKIL (159 aa)). The OBG-type G domain occupies 161-338 (ADVGLVGFPS…LLDATAELLD (178 aa)). GTP contacts are provided by residues 167 to 174 (GFPSVGKS), 192 to 196 (FTTIV), 214 to 217 (DLPG), 284 to 287 (NKMD), and 319 to 321 (SGL). Mg(2+) contacts are provided by S174 and T194. An OCT domain is found at 358 to 436 (GFDEEEKAFE…IGKFEFEFVD (79 aa)).

It belongs to the TRAFAC class OBG-HflX-like GTPase superfamily. OBG GTPase family. In terms of assembly, monomer. Mg(2+) serves as cofactor.

Its subcellular location is the cytoplasm. Functionally, an essential GTPase which binds GTP, GDP and possibly (p)ppGpp with moderate affinity, with high nucleotide exchange rates and a fairly low GTP hydrolysis rate. Plays a role in control of the cell cycle, stress response, ribosome biogenesis and in those bacteria that undergo differentiation, in morphogenesis control. This is GTPase Obg from Streptococcus pneumoniae (strain CGSP14).